The chain runs to 1253 residues: Cytoplasmic FMR1-interacting protein 1 homolog (1253 aa).

This sequence belongs to the CYFIP family.

The protein resides in the cytoplasm. The protein localises to the perinuclear region. It is found in the cell projection. It localises to the lamellipodium. Its subcellular location is the ruffle. The protein resides in the synapse. The protein localises to the synaptosome. Involved in formation of membrane ruffles and lamellipodia protrusions and in axon outgrowth. Binds to F-actin but not to RNA. This Danio rerio (Zebrafish) protein is Cytoplasmic FMR1-interacting protein 1 homolog.